The sequence spans 386 residues: 8-amino-7-oxononanoate synthase (386 aa).

Position 31 (R31) interacts with substrate. 109-110 (GY) is a pyridoxal 5'-phosphate binding site. H134 lines the substrate pocket. Pyridoxal 5'-phosphate-binding positions include S180, 205–208 (DEAH), and 236–239 (TLSK). K239 is modified (N6-(pyridoxal phosphate)lysine). A substrate-binding site is contributed by T349.

It belongs to the class-II pyridoxal-phosphate-dependent aminotransferase family. BioF subfamily. In terms of assembly, homodimer. Pyridoxal 5'-phosphate serves as cofactor.

It catalyses the reaction 6-carboxyhexanoyl-[ACP] + L-alanine + H(+) = (8S)-8-amino-7-oxononanoate + holo-[ACP] + CO2. Its pathway is cofactor biosynthesis; biotin biosynthesis. Its function is as follows. Catalyzes the decarboxylative condensation of pimeloyl-[acyl-carrier protein] and L-alanine to produce 8-amino-7-oxononanoate (AON), [acyl-carrier protein], and carbon dioxide. The sequence is that of 8-amino-7-oxononanoate synthase from Mycobacterium bovis (strain ATCC BAA-935 / AF2122/97).